The sequence spans 177 residues: Voltage-dependent L-type calcium channel subunit alpha-1C (177 aa).

The chain crosses the membrane as a helical span at residues 27 to 45 (ITFFRLFRVMRLVKLLSRG). A helical membrane pass occupies residues 64–84 (YVALLIVMLFFIYAVIGMQVF). The N-linked (GlcNAc...) asparagine glycan is linked to asparagine 90. The segment at residues 107-125 (AVLLLFRCATGEAWQEIML) is an intramembrane region (pore-forming). Positions 116 to 119 (TGEA) match the Selectivity filter of repeat IV motif. An intrachain disulfide couples cysteine 133 to cysteine 149. Asparagine 141 carries an N-linked (GlcNAc...) asparagine glycan. The helical transmembrane segment at 154-177 (AVFYFISFYMLCAFLIIDLFVAVI) threads the bilayer.

The protein belongs to the calcium channel alpha-1 subunit (TC 1.A.1.11) family. CACNA1C subfamily. Component of a calcium channel complex consisting of a pore-forming alpha subunit (CACNA1C) and ancillary beta, gamma and delta subunits. The channel complex contains alpha, beta, gamma and delta subunits in a 1:1:1:1 ratio, i.e. it contains only one of each type of subunit. CACNA1C channel activity is modulated by ancillary subunits, such as CACNB2, CACNB3, CACNA2D1 and CACNA2D4. In terms of processing, phosphorylation by PKA activates the channel.

It is found in the cell membrane. Its subcellular location is the perikaryon. It localises to the postsynaptic density membrane. The protein localises to the cell projection. The protein resides in the dendrite. It is found in the sarcolemma. Its subcellular location is the T-tubule. It catalyses the reaction Ca(2+)(in) = Ca(2+)(out). With respect to regulation, inhibited by dihydropyridines (DHP), such as isradipine. Channel activity is regulated by Ca(2+) and calmodulin. Pore-forming, alpha-1C subunit of the voltage-gated calcium channel that gives rise to L-type calcium currents. Mediates influx of calcium ions into the cytoplasm, and thereby triggers calcium release from the sarcoplasm. Plays an important role in excitation-contraction coupling in the heart. Required for normal heart development and normal regulation of heart rhythm. Required for normal contraction of smooth muscle cells in blood vessels and in the intestine. Essential for normal blood pressure regulation via its role in the contraction of arterial smooth muscle cells. Long-lasting (L-type) calcium channels belong to the 'high-voltage activated' (HVA) group. This chain is Voltage-dependent L-type calcium channel subunit alpha-1C (CACNA1C), found in Gallus gallus (Chicken).